We begin with the raw amino-acid sequence, 355 residues long: UDP-N-acetylglucosamine--N-acetylmuramyl-(pentapeptide) pyrophosphoryl-undecaprenol N-acetylglucosamine transferase (355 aa).

Residues 15–17 (TGG), N127, R163, S191, I244, 263–268 (ALTVSE), and Q288 contribute to the UDP-N-acetyl-alpha-D-glucosamine site.

It belongs to the glycosyltransferase 28 family. MurG subfamily.

The protein resides in the cell inner membrane. It carries out the reaction di-trans,octa-cis-undecaprenyl diphospho-N-acetyl-alpha-D-muramoyl-L-alanyl-D-glutamyl-meso-2,6-diaminopimeloyl-D-alanyl-D-alanine + UDP-N-acetyl-alpha-D-glucosamine = di-trans,octa-cis-undecaprenyl diphospho-[N-acetyl-alpha-D-glucosaminyl-(1-&gt;4)]-N-acetyl-alpha-D-muramoyl-L-alanyl-D-glutamyl-meso-2,6-diaminopimeloyl-D-alanyl-D-alanine + UDP + H(+). Its pathway is cell wall biogenesis; peptidoglycan biosynthesis. In terms of biological role, cell wall formation. Catalyzes the transfer of a GlcNAc subunit on undecaprenyl-pyrophosphoryl-MurNAc-pentapeptide (lipid intermediate I) to form undecaprenyl-pyrophosphoryl-MurNAc-(pentapeptide)GlcNAc (lipid intermediate II). This chain is UDP-N-acetylglucosamine--N-acetylmuramyl-(pentapeptide) pyrophosphoryl-undecaprenol N-acetylglucosamine transferase, found in Escherichia coli (strain 55989 / EAEC).